Reading from the N-terminus, the 100-residue chain is Urease subunit gamma (100 aa).

Belongs to the urease gamma subunit family. In terms of assembly, heterotrimer of UreA (gamma), UreB (beta) and UreC (alpha) subunits. Three heterotrimers associate to form the active enzyme.

The protein localises to the cytoplasm. The catalysed reaction is urea + 2 H2O + H(+) = hydrogencarbonate + 2 NH4(+). It functions in the pathway nitrogen metabolism; urea degradation; CO(2) and NH(3) from urea (urease route): step 1/1. In Vibrio parahaemolyticus, this protein is Urease subunit gamma.